The sequence spans 50 residues: Cuticle protein CP498 (50 aa).

2 tandem repeats follow at residues 6–23 and 30–47.

Calcified shell.

This chain is Cuticle protein CP498, found in Cancer pagurus (Rock crab).